We begin with the raw amino-acid sequence, 170 residues long: ATP synthase subunit b (170 aa).

A helical membrane pass occupies residues 25–45 (LIPNGTFFAVLIIFLIVLGVI). A disordered region spans residues 121-147 (EVAQTLTQADQQLSAQGDQVRSGLESS). Residues 122–139 (VAQTLTQADQQLSAQGDQ) show a composition bias toward polar residues.

Belongs to the ATPase B chain family. As to quaternary structure, F-type ATPases have 2 components, F(1) - the catalytic core - and F(0) - the membrane proton channel. F(1) has five subunits: alpha(3), beta(3), gamma(1), delta(1), epsilon(1). F(0) has three main subunits: a(1), b(2) and c(10-14). The alpha and beta chains form an alternating ring which encloses part of the gamma chain. F(1) is attached to F(0) by a central stalk formed by the gamma and epsilon chains, while a peripheral stalk is formed by the delta and b chains.

The protein localises to the cell membrane. In terms of biological role, f(1)F(0) ATP synthase produces ATP from ADP in the presence of a proton or sodium gradient. F-type ATPases consist of two structural domains, F(1) containing the extramembraneous catalytic core and F(0) containing the membrane proton channel, linked together by a central stalk and a peripheral stalk. During catalysis, ATP synthesis in the catalytic domain of F(1) is coupled via a rotary mechanism of the central stalk subunits to proton translocation. Its function is as follows. Component of the F(0) channel, it forms part of the peripheral stalk, linking F(1) to F(0). This chain is ATP synthase subunit b, found in Mycolicibacterium smegmatis (strain ATCC 700084 / mc(2)155) (Mycobacterium smegmatis).